A 427-amino-acid polypeptide reads, in one-letter code: Adenylosuccinate synthetase (427 aa).

GTP-binding positions include 12-18 (GDEGKGK) and 40-42 (GHT). Residue Asp-13 is the Proton acceptor of the active site. Mg(2+)-binding residues include Asp-13 and Gly-40. Residues 13 to 16 (DEGK), 38 to 41 (NAGH), Thr-128, Arg-142, Gln-223, Thr-238, and Arg-302 each bind IMP. The Proton donor role is filled by His-41. 298–304 (TTTGRPR) lines the substrate pocket. GTP is bound by residues Arg-304, 330 to 332 (SID), and 412 to 414 (SVG).

This sequence belongs to the adenylosuccinate synthetase family. Homodimer. Requires Mg(2+) as cofactor.

It is found in the cytoplasm. The catalysed reaction is IMP + L-aspartate + GTP = N(6)-(1,2-dicarboxyethyl)-AMP + GDP + phosphate + 2 H(+). It participates in purine metabolism; AMP biosynthesis via de novo pathway; AMP from IMP: step 1/2. In terms of biological role, plays an important role in the de novo pathway of purine nucleotide biosynthesis. Catalyzes the first committed step in the biosynthesis of AMP from IMP. The chain is Adenylosuccinate synthetase from Staphylococcus aureus (strain N315).